Consider the following 147-residue polypeptide: UPF0178 protein VIBHAR_03247 (147 aa).

It belongs to the UPF0178 family.

This is UPF0178 protein VIBHAR_03247 from Vibrio campbellii (strain ATCC BAA-1116).